Consider the following 27-residue polypeptide: Bombinin-like peptide 2 (27 aa).

An Asparagine amide modification is found at asparagine 27.

It belongs to the bombinin family. In terms of tissue distribution, expressed by the skin glands.

The protein localises to the secreted. Its function is as follows. Has antimicrobial activity, but no hemolytic activity. Preference on killing Gram-negative non-enteric bacteria. The sequence is that of Bombinin-like peptide 2 from Bombina orientalis (Oriental fire-bellied toad).